We begin with the raw amino-acid sequence, 156 residues long: Probable succinate transporter subunit YjjB (156 aa).

4 helical membrane-spanning segments follow: residues 7–27 (WALL…AMVF), 54–74 (FGMN…IIGI), 86–106 (VFTV…TAMI), and 128–148 (FLKA…PGIW).

This sequence belongs to the ThrE exporter (TC 2.A.79) family. In terms of assembly, the transporter is composed of YjjB and YjjP.

It localises to the cell inner membrane. Functionally, involved in succinate export with YjjP. Both proteins are required for export. This chain is Probable succinate transporter subunit YjjB, found in Pectobacterium carotovorum subsp. carotovorum (strain PC1).